We begin with the raw amino-acid sequence, 225 residues long: Phosphatidylserine decarboxylase proenzyme (225 aa).

Catalysis depends on Ser189, which acts as the Schiff-base intermediate with substrate; via pyruvic acid. Ser189 bears the Pyruvic acid (Ser); by autocatalysis mark.

It belongs to the phosphatidylserine decarboxylase family. PSD-A subfamily. In terms of assembly, heterodimer of a large membrane-associated beta subunit and a small pyruvoyl-containing alpha subunit. The cofactor is pyruvate. In terms of processing, is synthesized initially as an inactive proenzyme. Formation of the active enzyme involves a self-maturation process in which the active site pyruvoyl group is generated from an internal serine residue via an autocatalytic post-translational modification. Two non-identical subunits are generated from the proenzyme in this reaction, and the pyruvate is formed at the N-terminus of the alpha chain, which is derived from the carboxyl end of the proenzyme. The post-translation cleavage follows an unusual pathway, termed non-hydrolytic serinolysis, in which the side chain hydroxyl group of the serine supplies its oxygen atom to form the C-terminus of the beta chain, while the remainder of the serine residue undergoes an oxidative deamination to produce ammonia and the pyruvoyl prosthetic group on the alpha chain.

Its subcellular location is the cell membrane. The enzyme catalyses a 1,2-diacyl-sn-glycero-3-phospho-L-serine + H(+) = a 1,2-diacyl-sn-glycero-3-phosphoethanolamine + CO2. The protein operates within phospholipid metabolism; phosphatidylethanolamine biosynthesis; phosphatidylethanolamine from CDP-diacylglycerol: step 2/2. Functionally, catalyzes the formation of phosphatidylethanolamine (PtdEtn) from phosphatidylserine (PtdSer). This is Phosphatidylserine decarboxylase proenzyme from Amoebophilus asiaticus (strain 5a2).